The primary structure comprises 424 residues: Delta(14)-sterol reductase erg24 (424 aa).

Transmembrane regions (helical) follow at residues 19 to 39 and 112 to 132; these read IGAL…FYIC and LILG…MEFI. NADP(+) is bound by residues K317, R321, L344, W349, and 356–357; that span reads NY. A helical membrane pass occupies residues 370-390; it reads PAGFGSPIPYFYVAYFGVLLV. NADP(+) is bound by residues D396, 400–404, and Y411; that span reads CRVKY.

The protein belongs to the ERG4/ERG24 family.

The protein localises to the endoplasmic reticulum membrane. It carries out the reaction 4,4-dimethyl-5alpha-cholesta-8,24-dien-3beta-ol + NADP(+) = 4,4-dimethyl-5alpha-cholesta-8,14,24-trien-3beta-ol + NADPH + H(+). It participates in steroid biosynthesis; zymosterol biosynthesis; zymosterol from lanosterol: step 2/6. It functions in the pathway steroid metabolism; ergosterol biosynthesis. In terms of biological role, delta(14)-sterol reductase; part of the third module of ergosterol biosynthesis pathway that includes by the late steps of the pathway. Erg24 reduces the C14=C15 double bond of 4,4-dimethyl-cholesta-8,14,24-trienol to produce 4,4-dimethyl-cholesta-8,24-dienol. The third module or late pathway involves the ergosterol synthesis itself through consecutive reactions that mainly occur in the endoplasmic reticulum (ER) membrane. Firstly, the squalene synthase erg9 catalyzes the condensation of 2 farnesyl pyrophosphate moieties to form squalene, which is the precursor of all steroids. Secondly, squalene is converted into lanosterol by the consecutive action of the squalene epoxidase erg1 and the lanosterol synthase erg7. The lanosterol 14-alpha-demethylase erg11/cyp1 catalyzes C14-demethylation of lanosterol to produce 4,4'-dimethyl cholesta-8,14,24-triene-3-beta-ol. In the next steps, a complex process involving various demethylation, reduction and desaturation reactions catalyzed by the C-14 reductase erg24 and the C-4 demethylation complex erg25-erg26-erg27 leads to the production of zymosterol. Erg28 likely functions in the C-4 demethylation complex reaction by tethering erg26 and Erg27 to the endoplasmic reticulum or to facilitate interaction between these proteins. Then, the sterol 24-C-methyltransferase erg6 catalyzes the methyl transfer from S-adenosyl-methionine to the C-24 of zymosterol to form fecosterol. The C-8 sterol isomerase erg2 catalyzes the reaction which results in unsaturation at C-7 in the B ring of sterols and thus converts fecosterol to episterol. The sterol-C5-desaturases erg31 and erg32 then catalyze the introduction of a C-5 double bond in the B ring to produce 5-dehydroepisterol. The C-22 sterol desaturase erg5 further converts 5-dehydroepisterol into ergosta-5,7,22,24(28)-tetraen-3beta-ol by forming the C-22(23) double bond in the sterol side chain. Finally, ergosta-5,7,22,24(28)-tetraen-3beta-ol is substrate of the C-24(28) sterol reductase erg4 to produce ergosterol. In the genus Schizosaccharomyces, a second route exists between lanosterol and fecosterol, via the methylation of lanosterol to eburicol by erg6, followed by C14-demethylation by erg11/cyp1 and C4-demethylation by the demethylation complex erg25-erg26-erg27. The polypeptide is Delta(14)-sterol reductase erg24 (Schizosaccharomyces pombe (strain 972 / ATCC 24843) (Fission yeast)).